Reading from the N-terminus, the 356-residue chain is Glutamine synthetase N-1 (356 aa).

In terms of domain architecture, GS beta-grasp spans valine 19 to glycine 99. Positions lysine 106 to proline 356 constitute a GS catalytic domain.

Belongs to the glutamine synthetase family. As to quaternary structure, homooctamer. In terms of tissue distribution, this is a nodule isozyme.

The protein resides in the cytoplasm. It catalyses the reaction L-glutamate + NH4(+) + ATP = L-glutamine + ADP + phosphate + H(+). In Phaseolus vulgaris (Kidney bean), this protein is Glutamine synthetase N-1 (Gln-gamma).